Here is a 363-residue protein sequence, read N- to C-terminus: Carbamoyl phosphate synthase small chain (363 aa).

The segment at 1–171 (MEDGTLFAGA…PYRIPGPGPR (171 aa)) is CPSase. Residues Ser39, Gly219, and Gly221 each contribute to the L-glutamine site. Positions 171 to 359 (RVVAVDFGAK…LALVDRSAVS (189 aa)) constitute a Glutamine amidotransferase type-1 domain. Catalysis depends on Cys248, which acts as the Nucleophile. Residues Leu249, Gln252, Asn290, Gly292, and Tyr293 each contribute to the L-glutamine site. Active-site residues include His332 and Glu334.

Belongs to the CarA family. As to quaternary structure, composed of two chains; the small (or glutamine) chain promotes the hydrolysis of glutamine to ammonia, which is used by the large (or ammonia) chain to synthesize carbamoyl phosphate. Tetramer of heterodimers (alpha,beta)4.

It catalyses the reaction hydrogencarbonate + L-glutamine + 2 ATP + H2O = carbamoyl phosphate + L-glutamate + 2 ADP + phosphate + 2 H(+). The enzyme catalyses L-glutamine + H2O = L-glutamate + NH4(+). The protein operates within amino-acid biosynthesis; L-arginine biosynthesis; carbamoyl phosphate from bicarbonate: step 1/1. Its pathway is pyrimidine metabolism; UMP biosynthesis via de novo pathway; (S)-dihydroorotate from bicarbonate: step 1/3. Functionally, small subunit of the glutamine-dependent carbamoyl phosphate synthetase (CPSase). CPSase catalyzes the formation of carbamoyl phosphate from the ammonia moiety of glutamine, carbonate, and phosphate donated by ATP, constituting the first step of 2 biosynthetic pathways, one leading to arginine and/or urea and the other to pyrimidine nucleotides. The small subunit (glutamine amidotransferase) binds and cleaves glutamine to supply the large subunit with the substrate ammonia. The polypeptide is Carbamoyl phosphate synthase small chain (Symbiobacterium thermophilum (strain DSM 24528 / JCM 14929 / IAM 14863 / T)).